A 99-amino-acid chain; its full sequence is Large ribosomal subunit protein uL23 (99 aa).

It belongs to the universal ribosomal protein uL23 family. As to quaternary structure, part of the 50S ribosomal subunit. Contacts protein L29, and trigger factor when it is bound to the ribosome.

Its function is as follows. One of the early assembly proteins it binds 23S rRNA. One of the proteins that surrounds the polypeptide exit tunnel on the outside of the ribosome. Forms the main docking site for trigger factor binding to the ribosome. The sequence is that of Large ribosomal subunit protein uL23 from Shewanella loihica (strain ATCC BAA-1088 / PV-4).